A 974-amino-acid chain; its full sequence is Pentatricopeptide repeat-containing protein At5g61990, mitochondrial (974 aa).

Residues 1 to 31 constitute a mitochondrion transit peptide; it reads MMGSMLFRKRTLVTRANFLLFRSFSVNVEKL. PPR repeat units follow at residues 96–130, 150–184, 185–219, 220–250, 257–275, 276–310, 311–345, 346–380, 381–415, 416–450, 451–485, 486–520, 521–555, 556–590, 591–625, 626–660, 661–695, 696–730, 731–761, 765–799, 804–838, 839–873, 874–908, and 914–948; these read KLDS…NWPV, DGVL…ELVP, RLSR…NVVF, DVKT…TEKE, NVDG…GLVP, LKYT…GVSL, DNHT…GINI, KPYM…GLIP, QAQA…NIVI, SPYT…GCRP, NVVI…GIAP, DIFC…GLKP, NAFT…GVLP, NKVL…GILG, DAKT…GIAP, DVFS…GLTP, NVII…GLHP, NAVT…GLVP, DSFV…NKKG, STAP…SFDR, NDVT…NLMP, TVIT…GIEP, DHIM…NAVD, and SIST…QYIP.

The protein belongs to the PPR family. P subfamily.

Its subcellular location is the mitochondrion. The sequence is that of Pentatricopeptide repeat-containing protein At5g61990, mitochondrial from Arabidopsis thaliana (Mouse-ear cress).